Reading from the N-terminus, the 1239-residue chain is Anion exchange protein 2 (1239 aa).

Positions 1–237 are disordered; the sequence is MSSAPRRPAK…HRSYNLQERR (237 aa). At 1–706 the chain is on the cytoplasmic side; that stretch reads MSSAPRRPAK…DFRDALDPQC (706 aa). 2 stretches are compositionally biased toward basic and acidic residues: residues 37–49 and 58–75; these read ELHR…RFEE and GGEE…EYHR. 2 stretches are compositionally biased toward basic residues: residues 76–85 and 94–110; these read QSSHHIHHPL and RRRK…RRRP. S113, S132, S144, S170, and S172 each carry phosphoserine. The segment covering 120-133 has biased composition (acidic residues); that stretch reads TIEEGEEDEDEASE. A compositionally biased stretch (low complexity) spans 141–155; sequence TQPSPVSTPSSVQFF. A compositionally biased stretch (low complexity) spans 189–207; it reads GAQAGTQVEEAEAVAVASG. Over residues 208–217 the composition is skewed to gly residues; the sequence is TAGGDDGGAS. Phosphoserine is present on S241. T255 is subject to Phosphothreonine. K272 carries the post-translational modification N6-methyllysine. The tract at residues 285-318 is disordered; the sequence is HLVRKNAKGSTQSGREGREPGPTPRARPRAPHKP. S441 is modified (phosphoserine). Positions 447–468 are disordered; it reads SLLGHHHGQGAESDPHVTEPLI. 2 membrane (anion exchange) regions span residues 706-1239 and 708-1239; these read CLAA…PMPV and AAVI…PMPV. 4 consecutive transmembrane segments (helical) span residues 707–727, 752–772, 794–814, and 824–844; these read LAAV…FGGL, FCLL…LLVF, IGFW…SFLV, and IFAF…LVKI. The Extracellular segment spans residues 845 to 895; sequence FQEHPLHGCSASNSSEVDGGENMTWAVARPTLGPGNRSLAGQSGQGKPRGQ. Residues N857, N866, and N880 are each glycosylated (N-linked (GlcNAc...) asparagine). A helical membrane pass occupies residues 896–916; sequence PNTALLSLVLMAGTFFIAFFL. Residues 917 to 931 are Cytoplasmic-facing; it reads RKFKNSRFFPGRIRR. Transmembrane regions (helical) follow at residues 932–952, 987–1007, 1034–1054, 1088–1108, and 1111–1131; these read VIGD…DYSI, FPVW…ILIF, LLLI…WLAA, RVTG…GDLL, and IPLA…LNGI. C1171 carries S-palmitoyl cysteine lipidation. Residues 1172 to 1192 form a helical membrane-spanning segment; sequence LALLWAVMSTAASLAFPFILI.

The protein belongs to the anion exchanger (TC 2.A.31) family.

The protein resides in the apical cell membrane. Its subcellular location is the basolateral cell membrane. It carries out the reaction hydrogencarbonate(in) + chloride(out) = hydrogencarbonate(out) + chloride(in). Sodium-independent anion exchanger which mediates the electroneutral exchange of chloride for bicarbonate ions across the cell membrane. Plays an important role in osteoclast differentiation and function. Regulates bone resorption and calpain-dependent actin cytoskeleton organization in osteoclasts via anion exchange-dependent control of pH. Essential for intracellular pH regulation in CD8(+) T-cells upon CD3 stimulation, modulating CD8(+) T-cell response. The sequence is that of Anion exchange protein 2 (SLC4A2) from Pongo abelii (Sumatran orangutan).